The primary structure comprises 654 residues: tRNA uridine 5-carboxymethylaminomethyl modification enzyme MnmG (654 aa).

17–22 provides a ligand contact to FAD; the sequence is GGGHAG. 289–303 serves as a coordination point for NAD(+); it reads GPRYCPSIEDKIVKF.

This sequence belongs to the MnmG family. In terms of assembly, homodimer. Heterotetramer of two MnmE and two MnmG subunits. The cofactor is FAD.

It localises to the cytoplasm. Its function is as follows. NAD-binding protein involved in the addition of a carboxymethylaminomethyl (cmnm) group at the wobble position (U34) of certain tRNAs, forming tRNA-cmnm(5)s(2)U34. The polypeptide is tRNA uridine 5-carboxymethylaminomethyl modification enzyme MnmG (Prochlorococcus marinus (strain MIT 9515)).